The following is a 502-amino-acid chain: N-sulphoglucosamine sulphohydrolase (502 aa).

Positions 1–20 (MSCPVPACCALLLVLGLCRA) are cleaved as a signal peptide. Residues Asp31 and Asp32 each coordinate Ca(2+). Asn41 is a glycosylation site (N-linked (GlcNAc...) asparagine). Residue Cys70 coordinates Ca(2+). Cys70 serves as the catalytic Nucleophile. 3-oxoalanine (Cys) is present on Cys70. 2 N-linked (GlcNAc...) asparagine glycosylation sites follow: Asn142 and Asn151. A disulfide bond links Cys183 and Cys194. A glycan (N-linked (GlcNAc...) asparagine) is linked at Asn264. The Ca(2+) site is built by Asp273 and Asn274. An N-linked (GlcNAc...) asparagine glycan is attached at Asn413. Cys481 and Cys495 are oxidised to a cystine.

Belongs to the sulfatase family. Ca(2+) serves as cofactor. In terms of processing, the conversion to 3-oxoalanine (also known as C-formylglycine, FGly), of a serine or cysteine residue in prokaryotes and of a cysteine residue in eukaryotes, is critical for catalytic activity.

The protein localises to the lysosome. The enzyme catalyses N-sulfo-D-glucosamine + H2O = D-glucosamine + sulfate. Catalyzes a step in lysosomal heparan sulfate degradation. This chain is N-sulphoglucosamine sulphohydrolase (SGSH), found in Homo sapiens (Human).